The following is a 321-amino-acid chain: Thioredoxin reductase tcpT (321 aa).

FAD contacts are provided by residues 14-17, 36-41, H49, and A114; these read GGPA and DSGRYR. Residues C138 and C141 are joined by a disulfide bond. Residues D282 and 289–290 contribute to the FAD site; that span reads NV.

It belongs to the class-II pyridine nucleotide-disulfide oxidoreductase family. In terms of assembly, homodimer. FAD serves as cofactor.

The protein operates within secondary metabolite biosynthesis. Functionally, thioredoxin reductase; part of the gene cluster that mediates the biosynthesis of an unusual class of epipolythiodioxopiperazines (ETPs) lacking the reactive thiol group important for toxicity. Firstly, L-tyrosine is prenylated by tcpD, before undergoing condensation with L-glycine in a reaction catalyzed by the NRPS tcpP leading to the diketopiperazine (DKP) backbone. Afterwards the alpha-carbon of tyrosine is oxidized by the cytochrome P450 tcpC to form a hydroxyl group. However, in contrast other ETP biosynthesis pathways studied so far, tcpC is not able to bishydroxylate the DKP at both alpha-carbon positions, but hydroxylates the alpha-carbon of the tyrosine part and the nitrogen of the glycine part. The next steps involve an alpha,beta-elimination reaction catalyzed by tcpI, a methylation by the methyltransferase tcpN the action of the four enzyme cascade tcpG/K/J/I. Due to a dysfunctional cytochrome P450 monooxygenase tcpC, the pathway leads to the biosynthesis of probable non-toxic metabolites lacking the reactive thiol group. This Claviceps purpurea (strain 20.1) (Ergot fungus) protein is Thioredoxin reductase tcpT.